We begin with the raw amino-acid sequence, 396 residues long: tRNA (guanine(9)-N1)-methyltransferase (396 aa).

Basic and acidic residues-rich tracts occupy residues 1–18 (MEDD…HDEV) and 52–73 (DRID…HGKD). The disordered stretch occupies residues 1 to 109 (MEDDDRPRKY…KVKRKEKLVA (109 aa)). The SAM-dependent MTase TRM10-type domain maps to 139–357 (TQKKFQRSTL…QVIPQRKGGK (219 aa)). S-adenosyl-L-methionine contacts are provided by residues 264-265 (LS), glycine 284, 288-292 (DKNRH), cysteine 296, leucine 310, and 322-324 (QVL). Aspartate 288 serves as the catalytic Proton acceptor. The disordered stretch occupies residues 354-396 (KGGKLKSADHESEDQTPRESVEAVEAEPDGEGAAAEAGEGGKE). Residues 359-374 (KSADHESEDQTPRESV) show a composition bias toward basic and acidic residues.

It belongs to the class IV-like SAM-binding methyltransferase superfamily. TRM10 family. In terms of assembly, monomer.

Its subcellular location is the cytoplasm. The protein localises to the nucleus. The enzyme catalyses guanosine(9) in tRNA + S-adenosyl-L-methionine = N(1)-methylguanosine(9) in tRNA + S-adenosyl-L-homocysteine + H(+). Functionally, S-adenosyl-L-methionine-dependent guanine N(1)-methyltransferase that catalyzes the formation of N(1)-methylguanine at position 9 (m1G9) in cytoplasmic tRNA. The polypeptide is tRNA (guanine(9)-N1)-methyltransferase (Aspergillus fumigatus (strain ATCC MYA-4609 / CBS 101355 / FGSC A1100 / Af293) (Neosartorya fumigata)).